The chain runs to 382 residues: MNPLQTSTWQNQAPSFWLLRFSFIWLVSQKCCTASAVWTAYMNISFHVGNRMLSELGETGVFGRSSILKRVAGVVVPPEGKIQNACDPNTTFILPRNKEPWIALIERGGCAFTQKIKVASEHGARGVIIYNFPGTGNQVFPMSHQAFEDIVVVMIGNIKGMEILHLIRKGVHVTVMVEVGRKHVIWLNHYFVSFMIVTTATLAYFTFYHIRRLWVARIENRRWKRLTRELKKAFGQLQVRVLKEGDEEVNPNADSCVICFEAYKPNEIVRILTCKHFFHKNCIDPWILAHGTCPMCKCDILKALGIQMDIEDGTDSLQVLMSNELPGTLSPVEEETNYELPPARTSSKVTHVQEHPTSSANAGSQPPEAEETSHPSHGQQVL.

The 103-residue stretch at 65 to 167 (SSILKRVAGV…IKGMEILHLI (103 aa)) folds into the PA domain. The chain crosses the membrane as a helical span at residues 190-210 (YFVSFMIVTTATLAYFTFYHI). The segment at 256 to 297 (CVICFEAYKPNEIVRILTCKHFFHKNCIDPWILAHGTCPMCK) adopts an RING-type; atypical zinc-finger fold. The tract at residues 328-382 (TLSPVEEETNYELPPARTSSKVTHVQEHPTSSANAGSQPPEAEETSHPSHGQQVL) is disordered. Polar residues predominate over residues 344–364 (RTSSKVTHVQEHPTSSANAGS).

In terms of assembly, interacts with E3 ligase UBE2J1. Auto-ubiquitinated. In terms of tissue distribution, expression is testis-specific.

It is found in the endoplasmic reticulum membrane. The enzyme catalyses S-ubiquitinyl-[E2 ubiquitin-conjugating enzyme]-L-cysteine + [acceptor protein]-L-lysine = [E2 ubiquitin-conjugating enzyme]-L-cysteine + N(6)-ubiquitinyl-[acceptor protein]-L-lysine.. It functions in the pathway protein modification; protein ubiquitination. Has E3 ubiquitin-protein ligase activity. Plays a role in male fecundity through the interaction with the E2 ubituitin-protein ligase UBE2J1. This Mus musculus (Mouse) protein is E3 ubiquitin-protein ligase RNF133 (Rnf133).